A 226-amino-acid chain; its full sequence is Phosphoglycolate phosphatase (226 aa).

D8 serves as the catalytic Nucleophile. D8 and D10 together coordinate Mg(2+). A substrate-binding site is contributed by K152. Residues D175 and D179 each coordinate Mg(2+).

This sequence belongs to the archaeal SPP-like hydrolase family. Mg(2+) serves as cofactor.

The enzyme catalyses 2-phosphoglycolate + H2O = glycolate + phosphate. Its function is as follows. Catalyzes the dephosphorylation of 2-phosphoglycolate. The polypeptide is Phosphoglycolate phosphatase (Natronomonas pharaonis (strain ATCC 35678 / DSM 2160 / CIP 103997 / JCM 8858 / NBRC 14720 / NCIMB 2260 / Gabara) (Halobacterium pharaonis)).